The primary structure comprises 316 residues: Olfactory receptor 2G6 (316 aa).

At 1–25 (MEETNNSSEKGFLLLGFSDQPQLER) the chain is on the extracellular side. 2 N-linked (GlcNAc...) asparagine glycosylation sites follow: N5 and N6. A helical transmembrane segment spans residues 26 to 49 (FLFAIILYFYVLSLLGNTALILVC). Topologically, residues 50–57 (CLDSRLHT) are cytoplasmic. A helical membrane pass occupies residues 58-79 (PMYFFLSNLSCVDICFTTSVAP). The Extracellular portion of the chain corresponds to 80–100 (QLLVTMNKKDKTMSYGGCVAQ). An intrachain disulfide couples C97 to C189. A helical transmembrane segment spans residues 101-120 (LYVAMGLGSSECILLAVMAY). Residues 121–139 (DRYAAVCRPLRYIAIMHPR) lie on the Cytoplasmic side of the membrane. Residues 140–158 (FCASLAGGAWLSGLITSLI) traverse the membrane as a helical segment. The Extracellular portion of the chain corresponds to 159-195 (QCSLTVQLPLCGHRTLDHIFCEVPVLIKLACVDTTFN). Residues 196–219 (EAELFVASVVFLIVPVLLILVSYG) form a helical membrane-spanning segment. Residues 220–236 (FITQAVLRIKSAAGRQK) are Cytoplasmic-facing. A helical transmembrane segment spans residues 237–259 (AFGTCSSHLVVVIIFYGTIIFMY). At 260–272 (LQPANRRSKNQGK) the chain is on the extracellular side. A helical membrane pass occupies residues 273-292 (FVSLFYTIVTPLLNPIIYTL). At 293 to 316 (RNKDVKGALRTLILGSAAGQSHKD) the chain is on the cytoplasmic side.

The protein belongs to the G-protein coupled receptor 1 family.

Its subcellular location is the cell membrane. Functionally, odorant receptor. The chain is Olfactory receptor 2G6 (OR2G6) from Homo sapiens (Human).